The primary structure comprises 610 residues: UvrABC system protein C (610 aa).

In terms of domain architecture, GIY-YIG spans 16–94; the sequence is SQPGVYRMYD…IKLYQPRYNV (79 aa). Residues 204 to 239 enclose the UVR domain; that stretch reads QQVLHQLIERMENASKALNFEEAARIRDQIQAVRRV.

It belongs to the UvrC family. As to quaternary structure, interacts with UvrB in an incision complex.

It is found in the cytoplasm. Its function is as follows. The UvrABC repair system catalyzes the recognition and processing of DNA lesions. UvrC both incises the 5' and 3' sides of the lesion. The N-terminal half is responsible for the 3' incision and the C-terminal half is responsible for the 5' incision. This Serratia proteamaculans (strain 568) protein is UvrABC system protein C.